Here is a 357-residue protein sequence, read N- to C-terminus: Heat-inducible transcription repressor HrcA (357 aa).

It belongs to the HrcA family.

Functionally, negative regulator of class I heat shock genes (grpE-dnaK-dnaJ and groELS operons). Prevents heat-shock induction of these operons. This Anabaena sp. (strain L31) protein is Heat-inducible transcription repressor HrcA.